We begin with the raw amino-acid sequence, 184 residues long: Lipocalin-15 (184 aa).

The first 20 residues, 1-20, serve as a signal peptide directing secretion; the sequence is MMSFLLGAILTLLWAPTAQA. Cysteine 83 and cysteine 176 form a disulfide bridge.

This sequence belongs to the calycin superfamily. Lipocalin family.

Its subcellular location is the secreted. The sequence is that of Lipocalin-15 (LCN15) from Homo sapiens (Human).